Reading from the N-terminus, the 603-residue chain is MLETESSVCDNIAGNEKWRAEAEIGGNERALQALRELIIFPFRYPLEARTLGLKWPRGLLLYGPPGTGKTSLVRAVVQECDAHLIVLSPHSVHRAHAGESEKVLREAFAEASSHAVSDKPSVIFIDEIDVLCPRRDARREQDVRIASQLFTLMDSNKPSSSAPRVVVVASTNRVDAIDPALRRAGRFDALVEVSTPNEEDRLKILQLYTKKVNLDPSVDLQAIAISCNGYVGADLEALCREATISASKRSSDSLILTSQDFKIAKSVVGPSINRGITVEIPKVTWDDVGGLKDLKKKLQQAVEWPIKHSAAFVKMGISPMRGILLHGPPGCSKTTLAKAAANAAQASFFSLSCAELFSMYVGEGEALLRNTFQRARLASPSIIFFDEADVVACKRGDESSSNSSTVGERLLSTLLTEMDGLEEAKGILVLAATNRPYAIDAALMRPGRFDLVLYVPPPDLEARFEILQVHTRNMTLGDDVDLRKIAEETDLFTGAELEGLCRESGTVSLRENIAATAVFNRHFQTAKSSLKPALTIEEVETYSSFRKAAKRSDSKPIPINKKKATSTVFGFSWQLGVLSLLLLATGNYYFNHTKHELLVASAT.

Residues 63 to 70 and 327 to 334 contribute to the ATP site; these read GPPGTGKT and GPPGCSKT.

The protein belongs to the AAA ATPase family.

It is found in the nucleus. The protein localises to the cytoplasm. It localises to the cytoskeleton. Its subcellular location is the phragmoplast. Functionally, probably functions in cell division and growth processes. Interacts with certain SNAREs as part of specialized membrane fusion events where vesicles from the same organelle fuse (homotypic fusion). This Arabidopsis thaliana (Mouse-ear cress) protein is Cell division control protein 48 homolog B (CDC48B).